We begin with the raw amino-acid sequence, 506 residues long: MDPGPPPPAAPPQAQGPPSAPPPPGQAPPSAPGPPAPPGSQAAPQAPPAGHQIVHVRGDSETDLEALFNAVMNPKTANVPQTVPMRLRKLPDSFFKPPEPKAHSRQASTDAGTAGALTPQHVRAHSSPASLQLGAVSPGTLTPTGVSSGPAAAPSAQHLRQSSFEIPDDVPLPAGWEMAKTSSGQRYFLNHIDQTTTWQDPRKAMLSQMSVTAPTSPPVQQSMMTSASGPLPDGWEQAMTQDGEIYYINHKNKTTSWLDPRLDPRFAMNQRISQSAPVKQPPPLAPQSPPGVLGGGGSSQQQQMRLQQLQMEKERLRLKQQELLRQVRPQAMRNISPSTANSPKCQELALRSQLPTLEQDGGTPNPVPSPGMSQELRTMTTSGSDPFLNSGTYHSRDESTDSGLSMSSYSVPRTPDDFLNSVDEMDTGDTINQSTLPSQQNRFPDYLEAIPGTNVDLGTLEGDGMNIEGEELMPSLQEALSSDILNDMESVLAATKLDKESFLTWL.

Residues Met-1–Pro-38 are compositionally biased toward pro residues. Residues Met-1–Ser-60 are disordered. Residues Gly-39–Gly-50 are compositionally biased toward low complexity. The residue at position 60 (Ser-60) is a Phosphoserine. The residue at position 62 (Thr-62) is a Phosphothreonine. A disordered region spans residues Leu-90–Gly-112. 2 positions are modified to phosphoserine: Ser-104 and Ser-108. Phosphothreonine is present on residues Thr-109 and Thr-118. A phosphoserine mark is found at Ser-126, Ser-127, Ser-130, and Ser-137. Positions Gln-132–Arg-160 are disordered. Low complexity predominate over residues Ser-147–Ala-156. At Ser-163 the chain carries Phosphoserine. WW domains lie at Val-170–Ala-204 and Pro-230–Asp-263. Phosphoserine occurs at positions 273, 288, 369, 373, 384, 390, 399, 402, and 405. Disordered stretches follow at residues Gln-274–Gln-307 and Thr-356–Asp-416. Positions Lys-279–Pro-289 are enriched in pro residues. Positions Pro-290 to Leu-506 are transactivation domain. Residues Gly-371–Tyr-393 are compositionally biased toward polar residues. The segment covering Asp-401 to Val-411 has biased composition (polar residues). Phosphotyrosine is present on Tyr-409. The residue at position 414 (Thr-414) is a Phosphothreonine.

The protein belongs to the YAP1 family. In terms of assembly, binds to the SH3 domain of the YES kinase. Binds to WBP1 and WBP2. Binds, in vitro, through the WW1 domain, to neural isoforms of ENAH that contain the PPSY motif. The phosphorylated form interacts with YWHAB. Interacts (via WW domains) with LATS1 (via PPxY motif 2). Interacts with LATS2. Interacts with TEAD1, TEAD2 and TEAD3. Interacts wih TEAD4. Interacts with TP73. Interacts with RUNX1. Interacts with HCK. Interacts (via WW domains) with PTPN14 (via PPxY motif 2); this interaction leads to the cytoplasmic sequestration of YAP1 and inhibits its transcriptional coactivator activity. Interacts (when phosphorylated at Ser-112) with SMAD2, SMAD3 and WWTR1. Interacts with PRRG2 (via cytoplasmic domain). Interacts (via WW domains) with PRRG4 (via cytoplasmic domain). Interacts (phosphorylated) with CLDN18; the interaction sequesters YAP1 away from the nucleus and thereby restricts transcription of YAP1 target genes. Interacts with SMAD1. Interacts with AMOT; the interaction facilitates translocation of YAP1 to the cytoplasm and tight junctions. Interacts with AMOTL2, the interaction is required for ubiquitination of AMOTL2 and localization of YAP1 to tight junctions. Phosphorylated by LATS1 and LATS2; leading to cytoplasmic translocation and inactivation. Phosphorylated by ABL1; leading to YAP1 stabilization, enhanced interaction with TP73 and recruitment onto proapoptotic genes; in response to DNA damage. Phosphorylation at Ser-402 and Ser-405 by CK1 is triggered by previous phosphorylation at Ser-399 by LATS proteins and leads to YAP1 ubiquitination by SCF(beta-TRCP) E3 ubiquitin ligase and subsequent degradation. Phosphorylated at Thr-118, Ser-137, Ser-369 and Thr-414 by MAPK8/JNK1 and MAPK9/JNK2, which is required for the regulation of apoptosis by YAP1. Phosphorylated in the nucleus by PRP4K; phosphorylation leads to nuclear exclusion. In terms of processing, ubiquitinated by SCF(beta-TRCP) E3 ubiquitin ligase.

It is found in the cytoplasm. The protein localises to the nucleus. Its subcellular location is the cell junction. The protein resides in the tight junction. Functionally, transcriptional regulator with dual roles as a coactivator and corepressor. Critical downstream regulatory target in the Hippo signaling pathway, crucial for organ size control and tumor suppression by restricting proliferation and promoting apoptosis. The Hippo signaling pathway core involves a kinase cascade featuring STK3/MST2 and STK4/MST1, along with its regulatory partner SAV1, which phosphorylates and activates LATS1/2 in complex with their regulatory protein, MOB1. This activation leads to the phosphorylation and inactivation of the YAP1 oncoprotein and WWTR1/TAZ. Phosphorylation of YAP1 by LATS1/2 prevents its nuclear translocation, thereby regulating the expression of its target genes. The transcriptional regulation of gene expression requires TEAD transcription factors and modulates cell growth, anchorage-independent growth, and induction of epithelial-mesenchymal transition (EMT). Plays a key role in tissue tension and 3D tissue shape by regulating the cortical actomyosin network, acting via ARHGAP18, a Rho GTPase activating protein that suppresses F-actin polymerization. It also suppresses ciliogenesis by acting as a transcriptional corepressor of TEAD4 target genes AURKA and PLK1. In conjunction with WWTR1, regulates TGFB1-dependent SMAD2 and SMAD3 nuclear accumulation. Synergizes with WBP2 to enhance PGR activity. The polypeptide is Transcriptional coactivator YAP1 (YAP1) (Canis lupus familiaris (Dog)).